The chain runs to 496 residues: Glutamyl-tRNA(Gln) amidotransferase subunit B, organellar chromatophore (496 aa).

This sequence belongs to the GatB/GatE family. GatB subfamily. As to quaternary structure, subunit of the heterotrimeric GatCAB amidotransferase (AdT) complex, composed of A, B and C subunits.

The protein localises to the plastid. Its subcellular location is the organellar chromatophore. It carries out the reaction L-glutamyl-tRNA(Gln) + L-glutamine + ATP + H2O = L-glutaminyl-tRNA(Gln) + L-glutamate + ADP + phosphate + H(+). Functionally, allows the formation of correctly charged Gln-tRNA(Gln) through the transamidation of misacylated Glu-tRNA(Gln). The reaction takes place in the presence of glutamine and ATP through an activated gamma-phospho-Glu-tRNA(Gln). The protein is Glutamyl-tRNA(Gln) amidotransferase subunit B, organellar chromatophore of Paulinella chromatophora.